Here is a 376-residue protein sequence, read N- to C-terminus: Phosphoserine aminotransferase (376 aa).

Position 46 (arginine 46) interacts with L-glutamate. Residues 80 to 81, phenylalanine 104, threonine 150, aspartate 172, and glutamine 195 contribute to the pyridoxal 5'-phosphate site; that span reads AT. An N6-(pyridoxal phosphate)lysine modification is found at lysine 196. Residue 247–248 participates in pyridoxal 5'-phosphate binding; that stretch reads NT.

Belongs to the class-V pyridoxal-phosphate-dependent aminotransferase family. SerC subfamily. As to quaternary structure, homodimer. Pyridoxal 5'-phosphate serves as cofactor.

Its subcellular location is the cytoplasm. It catalyses the reaction O-phospho-L-serine + 2-oxoglutarate = 3-phosphooxypyruvate + L-glutamate. It carries out the reaction 4-(phosphooxy)-L-threonine + 2-oxoglutarate = (R)-3-hydroxy-2-oxo-4-phosphooxybutanoate + L-glutamate. Its pathway is amino-acid biosynthesis; L-serine biosynthesis; L-serine from 3-phospho-D-glycerate: step 2/3. It functions in the pathway cofactor biosynthesis; pyridoxine 5'-phosphate biosynthesis; pyridoxine 5'-phosphate from D-erythrose 4-phosphate: step 3/5. Functionally, catalyzes the reversible conversion of 3-phosphohydroxypyruvate to phosphoserine and of 3-hydroxy-2-oxo-4-phosphonooxybutanoate to phosphohydroxythreonine. This chain is Phosphoserine aminotransferase, found in Corynebacterium glutamicum (strain R).